Reading from the N-terminus, the 187-residue chain is Peptidyl-tRNA hydrolase (187 aa).

TRNA is bound at residue His-14. Catalysis depends on His-19, which acts as the Proton acceptor. Residues Tyr-62, Asn-64, and Asn-110 each contribute to the tRNA site.

This sequence belongs to the PTH family. As to quaternary structure, monomer.

The protein resides in the cytoplasm. It catalyses the reaction an N-acyl-L-alpha-aminoacyl-tRNA + H2O = an N-acyl-L-amino acid + a tRNA + H(+). Its function is as follows. Hydrolyzes ribosome-free peptidyl-tRNAs (with 1 or more amino acids incorporated), which drop off the ribosome during protein synthesis, or as a result of ribosome stalling. Catalyzes the release of premature peptidyl moieties from peptidyl-tRNA molecules trapped in stalled 50S ribosomal subunits, and thus maintains levels of free tRNAs and 50S ribosomes. In Chlorobaculum tepidum (strain ATCC 49652 / DSM 12025 / NBRC 103806 / TLS) (Chlorobium tepidum), this protein is Peptidyl-tRNA hydrolase.